We begin with the raw amino-acid sequence, 233 residues long: ATP synthase subunit a (233 aa).

6 consecutive transmembrane segments (helical) span residues 27 to 47 (ANFV…FAIL), 85 to 105 (YLAF…IGVV), 114 to 134 (VPSV…IVGV), 143 to 163 (LAHF…IELV), 189 to 209 (VFLK…HVFV), and 210 to 230 (SFLQ…GAVA).

Belongs to the ATPase A chain family. As to quaternary structure, F-type ATPases have 2 components, CF(1) - the catalytic core - and CF(0) - the membrane proton channel. CF(1) has five subunits: alpha(3), beta(3), gamma(1), delta(1), epsilon(1). CF(0) has three main subunits: a(1), b(2) and c(9-12). The alpha and beta chains form an alternating ring which encloses part of the gamma chain. CF(1) is attached to CF(0) by a central stalk formed by the gamma and epsilon chains, while a peripheral stalk is formed by the delta and b chains.

The protein localises to the cell inner membrane. In terms of biological role, key component of the proton channel; it plays a direct role in the translocation of protons across the membrane. This chain is ATP synthase subunit a, found in Solibacter usitatus (strain Ellin6076).